Consider the following 134-residue polypeptide: Cytochrome b5 (134 aa).

In terms of domain architecture, Cytochrome b5 heme-binding spans 5–81 (KKVLGFEEVS…MEKYYIGEID (77 aa)). The heme site is built by His40 and His64. Residues 107-127 (FMIKILQFLVPILILGLALVV) form a helical membrane-spanning segment.

The protein belongs to the cytochrome b5 family.

The protein localises to the endoplasmic reticulum membrane. It is found in the microsome membrane. Functionally, membrane bound hemoprotein which function as an electron carrier for several membrane bound oxygenases. The chain is Cytochrome b5 (CYB5) from Brassica oleracea var. botrytis (Cauliflower).